The following is a 167-amino-acid chain: S-ribosylhomocysteine lyase (167 aa).

The Fe cation site is built by His54, His58, and Cys128.

The protein belongs to the LuxS family. In terms of assembly, homodimer. The cofactor is Fe cation.

The catalysed reaction is S-(5-deoxy-D-ribos-5-yl)-L-homocysteine = (S)-4,5-dihydroxypentane-2,3-dione + L-homocysteine. In terms of biological role, involved in the synthesis of autoinducer 2 (AI-2) which is secreted by bacteria and is used to communicate both the cell density and the metabolic potential of the environment. The regulation of gene expression in response to changes in cell density is called quorum sensing. Catalyzes the transformation of S-ribosylhomocysteine (RHC) to homocysteine (HC) and 4,5-dihydroxy-2,3-pentadione (DPD). This is S-ribosylhomocysteine lyase from Haemophilus influenzae (strain PittEE).